Consider the following 231-residue polypeptide: L-ribulose-5-phosphate 4-epimerase AraD (231 aa).

Residues 27-28, 44-45, and 74-75 each bind substrate; these read GN, SG, and SS. Residues Asp-76, His-95, and His-97 each coordinate Zn(2+). Catalysis depends on Asp-120, which acts as the Proton donor/acceptor. Residue His-171 coordinates Zn(2+). Catalysis depends on Tyr-229, which acts as the Proton donor/acceptor.

Belongs to the aldolase class II family. AraD/FucA subfamily. Homotetramer. The cofactor is Zn(2+).

It catalyses the reaction L-ribulose 5-phosphate = D-xylulose 5-phosphate. The protein operates within carbohydrate degradation; L-arabinose degradation via L-ribulose; D-xylulose 5-phosphate from L-arabinose (bacterial route): step 3/3. Inhibited by glycolohydroxamate at concentration above 0.1 mM. Functionally, involved in the degradation of L-arabinose. Catalyzes the interconversion of L-ribulose 5-phosphate (LRu5P) and D-xylulose 5-phosphate (D-Xu5P) via a retroaldol/aldol mechanism (carbon-carbon bond cleavage analogous to a class II aldolase reaction). This chain is L-ribulose-5-phosphate 4-epimerase AraD, found in Escherichia coli (strain K12).